A 391-amino-acid chain; its full sequence is Cell cycle checkpoint control protein RAD9A (391 aa).

At tyrosine 28 the chain carries Phosphotyrosine. Positions 51–91 are possesses 3'-5' exonuclease activity; the sequence is FLFAPLFFQQYQAATPGQDLLRCKILMKSFLSVFRSLAMLE. The interval 266–391 is sufficient for interaction with ABL1; sequence SDTDSHSQDL…VLAEDSEGEG (126 aa). Positions 268–282 are enriched in basic and acidic residues; that stretch reads TDSHSQDLGSPERHQ. Disordered stretches follow at residues 268–301 and 319–391; these read TDSH…FAND and SRVL…EGEG. Phosphoserine occurs at positions 272, 277, and 328. Serine 341 bears the Phosphoserine; by CK2 mark. Serine 375 and serine 380 each carry phosphoserine. Serine 387 carries the phosphoserine; by CK2 modification.

The protein belongs to the rad9 family. In terms of assembly, component of the toroidal 9-1-1 (RAD9-RAD1-HUS1) complex, composed of RAD9A, RAD1 and HUS1. The 9-1-1 complex associates with LIG1, POLB, FEN1, RAD17, HDAC1, RPA1 and RPA2. The 9-1-1 complex associates with the RAD17-RFC complex. RAD9A interacts with BCL2L1, FEN1, RAD9B, ABL1, RPA1, ATAD5 and RPA2. Interacts with DNAJC7. Interacts (when phosphorylated) with TOPBP1. In terms of processing, constitutively phosphorylated on serine and threonine amino acids in absence of DNA damage. Hyperphosphorylated by PRKCD and ABL1 upon DNA damage. Its phosphorylation by PRKCD may be required for the formation of the 9-1-1 complex. Phosphorylated at Ser-341 and Ser-387 by CK2, promoting interaction with TOPBP1.

Its subcellular location is the nucleus. It carries out the reaction Exonucleolytic cleavage in the 3'- to 5'-direction to yield nucleoside 5'-phosphates.. Component of the 9-1-1 cell-cycle checkpoint response complex that plays a major role in DNA repair. The 9-1-1 complex is recruited to DNA lesion upon damage by the RAD17-replication factor C (RFC) clamp loader complex. Acts then as a sliding clamp platform on DNA for several proteins involved in long-patch base excision repair (LP-BER). The 9-1-1 complex stimulates DNA polymerase beta (POLB) activity by increasing its affinity for the 3'-OH end of the primer-template and stabilizes POLB to those sites where LP-BER proceeds; endonuclease FEN1 cleavage activity on substrates with double, nick, or gap flaps of distinct sequences and lengths; and DNA ligase I (LIG1) on long-patch base excision repair substrates. The 9-1-1 complex is necessary for the recruitment of RHNO1 to sites of double-stranded breaks (DSB) occurring during the S phase. RAD9A possesses 3'-&gt;5' double stranded DNA exonuclease activity. The sequence is that of Cell cycle checkpoint control protein RAD9A (RAD9A) from Homo sapiens (Human).